A 1758-amino-acid polypeptide reads, in one-letter code: RanBP2-like and GRIP domain-containing protein 4 (1758 aa).

S21 is modified (phosphoserine). 2 TPR repeats span residues 60–93 and 584–617; these read PRAHRFLGLLYELEENTEKAVECYRRSVELNPTQ and QKMGSGLNSFYDQREYIGRSVHYWKKVLPLLKII. Positions 761–805 are disordered; it reads DPLYKNGSLRNADSEIKHSTPSPTKYSLSPSKSYKYSPKTPPRWA. Residues 779-798 are compositionally biased toward low complexity; the sequence is STPSPTKYSLSPSKSYKYSP. In terms of domain architecture, RanBD1 1 spans 1037–1173; the sequence is HFEPVVQMPE…FEECQQLLLD (137 aa). 2 disordered regions span residues 1213–1249 and 1295–1332; these read QTKVTEEENKGSGTGAAGASDTTIKPNPENTGPTLEW and SFKSALSPSKSPAKLNQSGTSVGTDEESDVTQEEERDG. The span at 1236–1245 shows a compositional bias: polar residues; it reads IKPNPENTGP. The span at 1295 to 1309 shows a compositional bias: low complexity; the sequence is SFKSALSPSKSPAKL. Acidic residues predominate over residues 1318-1330; that stretch reads TDEESDVTQEEER. The region spanning 1334–1470 is the RanBD1 2 domain; the sequence is YFEPVVPLPD…FDEAKTAQEK (137 aa). Residues 1583-1594 show a composition bias toward polar residues; it reads SETSSVAQSGSE. The interval 1583 to 1621 is disordered; sequence SETSSVAQSGSESKVEPKKCELSKNSDIEQSSDSKVKNL. Basic and acidic residues predominate over residues 1595-1618; sequence SKVEPKKCELSKNSDIEQSSDSKV. A GRIP domain is found at 1703-1753; it reads QEESAANVEHLKNVLLQFIFLKPGSERERLLPVINTMLQLSPEEKGKLAAV.

In Homo sapiens (Human), this protein is RanBP2-like and GRIP domain-containing protein 4 (RGPD4).